Reading from the N-terminus, the 369-residue chain is DNA replication and repair protein RecF (369 aa).

30-37 (GQNGMGKT) contacts ATP.

The protein belongs to the RecF family.

The protein resides in the cytoplasm. In terms of biological role, the RecF protein is involved in DNA metabolism; it is required for DNA replication and normal SOS inducibility. RecF binds preferentially to single-stranded, linear DNA. It also seems to bind ATP. The sequence is that of DNA replication and repair protein RecF from Bacteroides thetaiotaomicron (strain ATCC 29148 / DSM 2079 / JCM 5827 / CCUG 10774 / NCTC 10582 / VPI-5482 / E50).